The chain runs to 457 residues: Heme sensor protein HssS (457 aa).

Helical transmembrane passes span 9-29 (IAIY…VLTN) and 164-184 (TFLA…VIAS). The HAMP domain occupies 186–238 (YSIIRPVKKLKLATERLIDGDFETPIKQTRKDEIGTLQYHFNKMRESLGQVDQ). One can recognise a Histidine kinase domain in the interval 246 to 456 (NVSHEIKTPL…TFTITLPNNS (211 aa)). His249 is subject to Phosphohistidine; by autocatalysis.

Post-translationally, autophosphorylated.

It localises to the cell membrane. It carries out the reaction ATP + protein L-histidine = ADP + protein N-phospho-L-histidine.. Functionally, member of the two-component regulatory system HssS/HssR involved in intracellular heme homeostasis and tempering of staphylococcal virulence. HssS functions as a heme sensor histidine kinase which is autophosphorylated at a histidine residue and transfers its phosphate group to an aspartate residue of HssR. HssR/HssS activates the expression of hrtAB, an efflux pump, in response to extracellular heme, hemin, hemoglobin or blood. In Staphylococcus aureus (strain MSSA476), this protein is Heme sensor protein HssS (hssS).